The following is a 215-amino-acid chain: MESSNLYSKLLNAPKNAPVFLSQNLEADFIVKAYTFGLFPWTSKPVTWWCPDPRCILIPNQIHIQKNMKKFINLYQIKLDYDFLKLITLCRDTRSQSWIDDEFITTYYKLFTQGYAHSLELYENNELIGGIYGLILGKVFFGESMVSIKKNASKVAMIKLCDLLKPYDFIIDCQVYNQHLEFMGAHNISRKEFLNILKEKCNQESGFKNFKDLIT.

It belongs to the L/F-transferase family.

It localises to the cytoplasm. It catalyses the reaction N-terminal L-lysyl-[protein] + L-leucyl-tRNA(Leu) = N-terminal L-leucyl-L-lysyl-[protein] + tRNA(Leu) + H(+). It carries out the reaction N-terminal L-arginyl-[protein] + L-leucyl-tRNA(Leu) = N-terminal L-leucyl-L-arginyl-[protein] + tRNA(Leu) + H(+). The catalysed reaction is L-phenylalanyl-tRNA(Phe) + an N-terminal L-alpha-aminoacyl-[protein] = an N-terminal L-phenylalanyl-L-alpha-aminoacyl-[protein] + tRNA(Phe). Its function is as follows. Functions in the N-end rule pathway of protein degradation where it conjugates Leu, Phe and, less efficiently, Met from aminoacyl-tRNAs to the N-termini of proteins containing an N-terminal arginine or lysine. This is Leucyl/phenylalanyl-tRNA--protein transferase from Campylobacter jejuni subsp. jejuni serotype O:6 (strain 81116 / NCTC 11828).